The primary structure comprises 153 residues: ATP synthase subunit b' (153 aa).

Residues threonine 20–phenylalanine 40 traverse the membrane as a helical segment.

This sequence belongs to the ATPase B chain family. F-type ATPases have 2 components, F(1) - the catalytic core - and F(0) - the membrane proton channel. F(1) has five subunits: alpha(3), beta(3), gamma(1), delta(1), epsilon(1). F(0) has four main subunits: a(1), b(1), b'(1) and c(10-14). The alpha and beta chains form an alternating ring which encloses part of the gamma chain. F(1) is attached to F(0) by a central stalk formed by the gamma and epsilon chains, while a peripheral stalk is formed by the delta, b and b' chains.

It is found in the cellular thylakoid membrane. F(1)F(0) ATP synthase produces ATP from ADP in the presence of a proton or sodium gradient. F-type ATPases consist of two structural domains, F(1) containing the extramembraneous catalytic core and F(0) containing the membrane proton channel, linked together by a central stalk and a peripheral stalk. During catalysis, ATP synthesis in the catalytic domain of F(1) is coupled via a rotary mechanism of the central stalk subunits to proton translocation. Functionally, component of the F(0) channel, it forms part of the peripheral stalk, linking F(1) to F(0). The b'-subunit is a diverged and duplicated form of b found in plants and photosynthetic bacteria. This is ATP synthase subunit b' from Prochlorococcus marinus (strain NATL2A).